The primary structure comprises 491 residues: Nicotinamide phosphoribosyltransferase (491 aa).

At methionine 1 the chain carries N-acetylmethionine. The residue at position 188 (tyrosine 188) is a Phosphotyrosine. Arginine 196 serves as a coordination point for diphosphate. Aspartate 219 serves as a coordination point for beta-nicotinamide D-ribonucleotide. Histidine 247 and arginine 311 together coordinate diphosphate. Residues arginine 311–aspartate 313, glycine 353–aspartate 354, glycine 384, and arginine 392 each bind beta-nicotinamide D-ribonucleotide. Serine 472 is subject to Phosphoserine.

Belongs to the NAPRTase family. In terms of assembly, homodimer. Expressed in various tissues. At the highest level in liver and at the second highest in heart. The amount is higher in heart than in lung.

Its subcellular location is the nucleus. The protein resides in the cytoplasm. It is found in the secreted. It carries out the reaction beta-nicotinamide D-ribonucleotide + diphosphate = 5-phospho-alpha-D-ribose 1-diphosphate + nicotinamide + H(+). It participates in cofactor biosynthesis; NAD(+) biosynthesis; nicotinamide D-ribonucleotide from 5-phospho-alpha-D-ribose 1-diphosphate and nicotinamide: step 1/1. In terms of biological role, catalyzes the condensation of nicotinamide with 5-phosphoribosyl-1-pyrophosphate to yield nicotinamide mononucleotide, an intermediate in the biosynthesis of NAD. It is the rate limiting component in the mammalian NAD biosynthesis pathway. The secreted form behaves both as a cytokine with immunomodulating properties and an adipokine with anti-diabetic properties, it has no enzymatic activity, partly because of lack of activation by ATP, which has a low level in extracellular space and plasma. Plays a role in the modulation of circadian clock function. NAMPT-dependent oscillatory production of NAD regulates oscillation of clock target gene expression by releasing the core clock component: CLOCK-BMAL1 heterodimer from NAD-dependent SIRT1-mediated suppression. The protein is Nicotinamide phosphoribosyltransferase (Nampt) of Rattus norvegicus (Rat).